Reading from the N-terminus, the 714-residue chain is Fatty acid oxidation complex subunit alpha (714 aa).

Positions 1–190 are enoyl-CoA hydratase; that stretch reads MEMASAFTLN…KLGLVDDVVP (190 aa). The interval 306-714 is 3-hydroxyacyl-CoA dehydrogenase; the sequence is APLNSVGILG…FWKTTATDLQ (409 aa).

The protein in the N-terminal section; belongs to the enoyl-CoA hydratase/isomerase family. This sequence in the central section; belongs to the 3-hydroxyacyl-CoA dehydrogenase family. As to quaternary structure, heterotetramer of two alpha chains (FadJ) and two beta chains (FadI).

The protein localises to the cytoplasm. It carries out the reaction a (3S)-3-hydroxyacyl-CoA = a (2E)-enoyl-CoA + H2O. The enzyme catalyses a 4-saturated-(3S)-3-hydroxyacyl-CoA = a (3E)-enoyl-CoA + H2O. The catalysed reaction is a (3S)-3-hydroxyacyl-CoA + NAD(+) = a 3-oxoacyl-CoA + NADH + H(+). It catalyses the reaction (3S)-3-hydroxybutanoyl-CoA = (3R)-3-hydroxybutanoyl-CoA. It functions in the pathway lipid metabolism; fatty acid beta-oxidation. In terms of biological role, catalyzes the formation of a hydroxyacyl-CoA by addition of water on enoyl-CoA. Also exhibits 3-hydroxyacyl-CoA epimerase and 3-hydroxyacyl-CoA dehydrogenase activities. The polypeptide is Fatty acid oxidation complex subunit alpha (Escherichia coli O127:H6 (strain E2348/69 / EPEC)).